The chain runs to 308 residues: Spermidine synthase 2 (308 aa).

Residues 17–254 form the PABS domain; sequence PGWFSEISPL…GVIGFMLCST (238 aa). Q48 contributes to the S-adenosyl 3-(methylsulfanyl)propylamine binding site. A putrescine-binding site is contributed by Y78. Residues Q79, D103, E123, 154-155, and D173 each bind S-adenosyl 3-(methylsulfanyl)propylamine; that span reads DG. The active-site Proton acceptor is the D173. Putrescine contacts are provided by residues 173 to 176 and Y242; that span reads DSSD.

Belongs to the spermidine/spermine synthase family.

The catalysed reaction is S-adenosyl 3-(methylsulfanyl)propylamine + putrescine = S-methyl-5'-thioadenosine + spermidine + H(+). It participates in amine and polyamine biosynthesis; spermidine biosynthesis; spermidine from putrescine: step 1/1. The protein is Spermidine synthase 2 of Hyoscyamus niger (Black henbane).